We begin with the raw amino-acid sequence, 165 residues long: Transcription antitermination protein NusB (165 aa).

Belongs to the NusB family.

Involved in transcription antitermination. Required for transcription of ribosomal RNA (rRNA) genes. Binds specifically to the boxA antiterminator sequence of the ribosomal RNA (rrn) operons. This chain is Transcription antitermination protein NusB, found in Bradyrhizobium diazoefficiens (strain JCM 10833 / BCRC 13528 / IAM 13628 / NBRC 14792 / USDA 110).